Reading from the N-terminus, the 186-residue chain is Elongation factor P (186 aa).

It belongs to the elongation factor P family.

Its subcellular location is the cytoplasm. Its pathway is protein biosynthesis; polypeptide chain elongation. Its function is as follows. Involved in peptide bond synthesis. Stimulates efficient translation and peptide-bond synthesis on native or reconstituted 70S ribosomes in vitro. Probably functions indirectly by altering the affinity of the ribosome for aminoacyl-tRNA, thus increasing their reactivity as acceptors for peptidyl transferase. This chain is Elongation factor P, found in Neisseria gonorrhoeae (strain NCCP11945).